Here is a 140-residue protein sequence, read N- to C-terminus: Sex-regulated protein janus-B (140 aa).

Substrate is bound at residue Arg42. The active-site Proton acceptor is the His69. 110–112 (SRT) contributes to the substrate binding site.

This sequence belongs to the janus family.

In terms of biological role, janA and janB regulate somatic sex differentiation. In Drosophila simulans (Fruit fly), this protein is Sex-regulated protein janus-B (janB).